Consider the following 452-residue polypeptide: Ribosomal protein uS12 methylthiotransferase RimO (452 aa).

Residues 5–116 (PTIAFSHLGC…IVDVLQRTES (112 aa)) form the MTTase N-terminal domain. Residues C14, C50, C79, C154, C158, and C161 each coordinate [4Fe-4S] cluster. A Radical SAM core domain is found at 140-369 (TTTSAVAYLR…MATQQPIAER (230 aa)). One can recognise a TRAM domain in the interval 372 to 438 (RAQIGRLVDV…IYDLHGEVAS (67 aa)).

Belongs to the methylthiotransferase family. RimO subfamily. [4Fe-4S] cluster is required as a cofactor.

The protein localises to the cytoplasm. The enzyme catalyses L-aspartate(89)-[ribosomal protein uS12]-hydrogen + (sulfur carrier)-SH + AH2 + 2 S-adenosyl-L-methionine = 3-methylsulfanyl-L-aspartate(89)-[ribosomal protein uS12]-hydrogen + (sulfur carrier)-H + 5'-deoxyadenosine + L-methionine + A + S-adenosyl-L-homocysteine + 2 H(+). In terms of biological role, catalyzes the methylthiolation of an aspartic acid residue of ribosomal protein uS12. This Synechococcus elongatus (strain ATCC 33912 / PCC 7942 / FACHB-805) (Anacystis nidulans R2) protein is Ribosomal protein uS12 methylthiotransferase RimO.